The chain runs to 461 residues: Protein naked cuticle homolog 2 (461 aa).

Residues 1–106 (MGKFQSKHAA…DGEKAASREG (106 aa)) are disordered. G2 carries the N-myristoyl glycine lipid modification. 2 stretches are compositionally biased toward basic and acidic residues: residues 34 to 73 (RGAEETDRRAGSGVEHRSRDKQELLNGDPKEGPFWDDKGS) and 97 to 106 (DGEKAASREG). Residues 121-186 (QCDVSVEEDN…LRVKLTVSPE (66 aa)) are interaction with DVL1, DVL2 and DVL3. Residues 127 to 162 (EEDNRQEWTFTLYDFDNSGKVTREDMSSLMHTIYEV) form the EF-hand domain. 5 residues coordinate Ca(2+): D140, D142, S144, K146, and D151. 5 disordered regions span residues 176-205 (TLRVKLTVSPEPSSKKECPLTGQDREPTRG), 263-302 (YTSKFGPGSPPEQARQEHHGRATHIPSRSRSQESDAHAIH), 321-359 (TRALAAQPRIKGQEKQFLRSPKGPGKPLGTPGSGKPGKA), 372-414 (SAQD…GQPT), and 441-461 (HEHHHHHEHHHHHHHHHFHPS). Positions 188–205 (SSKKECPLTGQDREPTRG) are enriched in basic and acidic residues. Residues 307–396 (QVLAEHVIPA…PPQPYGHKRY (90 aa)) form an interaction with TGFA region. Positions 341 to 350 (PKGPGKPLGT) are enriched in low complexity. The span at 380-390 (PQPPPQPPPQP) shows a compositional bias: pro residues.

This sequence belongs to the NKD family. Interacts with RNF25, TGFA (via cytoplasmic domain), and PPP2R3A. Interacts with DVL1, DVL2 and DVL3. In terms of processing, ubiquitinated, leading to rapid proteasomal degradation. Interaction with TGFA interferes with RNF25 binding and protects against ubiquitination mediated by RNF25. Expressed in the cecum, colon, esophagus, ileum, jejunum, skin and stomach.

The protein resides in the cell membrane. The protein localises to the cytoplasm. Its subcellular location is the cytoplasmic vesicle. Its function is as follows. Cell autonomous antagonist of the canonical Wnt signaling pathway. May activate a second Wnt signaling pathway that controls planar cell polarity. Required for processing of TGFA and for targeting of TGFA to the basolateral membrane of polarized epithelial cells. This chain is Protein naked cuticle homolog 2 (Nkd2), found in Mus musculus (Mouse).